Reading from the N-terminus, the 181-residue chain is Transcriptional repressor NrdR (181 aa).

The segment at 3-34 (CLFCQHTDTRVIDSRVSEDGATIRRRRECEAC) is a zinc-finger region. The 91-residue stretch at 49-139 (PVIIKKDGGR…VYRSFQDVAD (91 aa)) folds into the ATP-cone domain.

The protein belongs to the NrdR family. Zn(2+) serves as cofactor.

Functionally, negatively regulates transcription of bacterial ribonucleotide reductase nrd genes and operons by binding to NrdR-boxes. In Xylella fastidiosa (strain M12), this protein is Transcriptional repressor NrdR.